The primary structure comprises 351 residues: Nicotinate-nucleotide--dimethylbenzimidazole phosphoribosyltransferase (351 aa).

E317 functions as the Proton acceptor in the catalytic mechanism.

The protein belongs to the CobT family.

It carries out the reaction 5,6-dimethylbenzimidazole + nicotinate beta-D-ribonucleotide = alpha-ribazole 5'-phosphate + nicotinate + H(+). Its pathway is nucleoside biosynthesis; alpha-ribazole biosynthesis; alpha-ribazole from 5,6-dimethylbenzimidazole: step 1/2. Its function is as follows. Catalyzes the synthesis of alpha-ribazole-5'-phosphate from nicotinate mononucleotide (NAMN) and 5,6-dimethylbenzimidazole (DMB). The protein is Nicotinate-nucleotide--dimethylbenzimidazole phosphoribosyltransferase of Ectopseudomonas mendocina (strain ymp) (Pseudomonas mendocina).